Reading from the N-terminus, the 204-residue chain is Altered inheritance of mitochondria protein 20 (204 aa).

The chain crosses the membrane as a helical span at residues 6–26 (VAVGTAVGIPIAVGVIIALIF).

It belongs to the SKG1 family.

Its subcellular location is the vacuole membrane. Its function is as follows. Involved in cell cycle progression and surviving DNA damage. This Saccharomyces cerevisiae (strain JAY291) (Baker's yeast) protein is Altered inheritance of mitochondria protein 20 (AIM20).